The following is a 1032-amino-acid chain: Protein phosphatase 1 regulatory subunit 12A (1032 aa).

Residues 35 to 38 (KVKF) carry the KVKF motif motif. ANK repeat units follow at residues 39–68 (DDGAVFLAACSSGDTDEVLKLLHRGADINY), 72–101 (DGLTALHQACIDDNVDMVKFLVENGANINQ), 105–134 (EGWIPLHAAASCGYLDIAEFLIGQGAHVGA), 138–164 (EGDTPLDIAEEEAMEELLQNEVNRQGV), 198–227 (SGGTALHVAAAKGYTEVLKLLIQAGYDVNI), and 231–260 (DGWTPLHAAAHWGKEEACRILVDNLCDMET). 2 positions are modified to (3S)-3-hydroxyasparagine; by HIF1AN: asparagine 67 and asparagine 100. Asparagine 226 bears the (3S)-3-hydroxyasparagine; by HIF1AN mark. 2 disordered regions span residues 290–553 (LHSE…HRSC) and 588–928 (SSTS…RLEK). Residues 291-300 (HSEKRDKKSP) are compositionally biased toward basic and acidic residues. Residue serine 299 is modified to Phosphoserine. Residues 302–316 (IESTANMENNQPQKT) show a composition bias toward polar residues. The span at 318–340 (KNKETLIIEPEKNASRIESLEQE) shows a compositional bias: basic and acidic residues. The span at 357–369 (SEEDEEDDSESEA) shows a compositional bias: acidic residues. Residues 383–399 (AHTASTQAAPAAVTTPT) are compositionally biased toward low complexity. A compositionally biased stretch (polar residues) spans 400–421 (LSSNQGTPTSPVKKFPTSTTKI). Serine 422 and serine 432 each carry phosphoserine. Basic and acidic residues predominate over residues 422–432 (SPKEEERKDES). At threonine 443 the chain carries Phosphothreonine. Serine 445 carries the phosphoserine modification. Tyrosine 446 is subject to Phosphotyrosine. The segment covering 469 to 480 (RSASSPRLSSSL) has biased composition (low complexity). At serine 472 the chain carries Phosphoserine; by NUAK1. The residue at position 473 (serine 473) is a Phosphoserine; by CDK1. Phosphoserine is present on serine 477. Residues 481–491 (DNKEKEKDNKG) show a composition bias toward basic and acidic residues. Serine 507 and serine 509 each carry phosphoserine. The segment covering 540 to 551 (NSSINEGSTYHR) has biased composition (polar residues). At serine 601 the chain carries Phosphoserine. Polar residues predominate over residues 602-612 (PAGTQSSTSNR). Residues 614-625 (WAEDSTEKEKDS) show a composition bias toward basic and acidic residues. A Phosphoserine modification is found at serine 618. Residues 633-661 (LVAPTVVSAAASSTTALTTTTAGTLSSTS) show a composition bias toward low complexity. The span at 674–683 (VRDEESESQR) shows a compositional bias: basic and acidic residues. Residues 683-866 (RKARSRQARQ…VSFWTQDSDE (184 aa)) form an interaction with ROCK2 region. Over residues 684–694 (KARSRQARQSR) the composition is skewed to basic residues. 2 positions are modified to phosphoserine; by PKA and PKG; in vitro: serine 693 and serine 696. Position 697 is a phosphothreonine; by ROCK1, ROCK2, CDC42BP, ZIPK/DAPK3 and RAF1 (threonine 697). Basic and acidic residues predominate over residues 719-768 (RTREQENEEKDKEEKEKQDKEKQEEKKESEVSREDEYKQKYSRTYDETYA). Residues 774 to 797 (STSSSSTPSSSSLSTLGSSLYASS) show a composition bias toward low complexity. Positions 798–812 (QLNRPNSLVGITSAY) are enriched in polar residues. Serine 804 carries the phosphoserine modification. Residues 816–842 (LTKDNEREGEKKEEEKEGEDKSQPKSI) are compositionally biased toward basic and acidic residues. Positions 843–854 (RERRRPREKRRS) are enriched in basic residues. A Phosphoserine; by ROCK2 modification is found at serine 854. Phosphoserine occurs at positions 864 and 873. Over residues 869–885 (QERQSDTEDGSSKRDTQ) the composition is skewed to basic and acidic residues. Over residues 886–900 (TDSVSRYDSSSTSSS) the composition is skewed to low complexity. Phosphoserine is present on residues serine 905 and serine 910. Residue serine 912 is modified to Phosphoserine; by NUAK1. Positions 916–928 (LEERKPYGSRLEK) are enriched in basic and acidic residues. Serine 997 bears the Phosphoserine mark.

As to quaternary structure, PP1 comprises a catalytic subunit, PPP1CA, PPP1CB or PPP1CC, and one or several targeting or regulatory subunits. PPP1R12A mediates binding to myosin. Interacts with ARHA and CIT. Binds PPP1R12B, ROCK1 and IL16. Interacts directly with PRKG1. Non-covalent dimer of 2 dimers; PRKG1-PRKG1 and PPP1R12A-PPP1R12A. Interacts with SMTNL1. Interacts with PPP1CB; the interaction is direct. Interacts (when phosphorylated at Ser-445, Ser-472 and Ser-910) with 14-3-3. Interacts with ROCK1 and ROCK2. Interacts with isoform 1 and isoform 2 of ZIPK/DAPK3. Interacts with RAF1. Interacts with HIF1AN. Interacts with NCKAP1L. Post-translationally, phosphorylated on upon DNA damage, probably by ATM or ATR. Phosphorylated by CIT (Rho-associated kinase). Phosphorylated cooperatively by ROCK1 and CDC42BP on Thr-697. In vitro, phosphorylation of Ser-696 by PKA and PKG appears to prevent phosphorylation of the inhibitory site Thr-697, probably mediated by PRKG1. May be phosphorylated at Thr-697 by DMPK; may inhibit the myosin phosphatase activity. Phosphorylated at Ser-473 by CDK1 during mitosis, creating docking sites for the POLO box domains of PLK1. Subsequently, PLK1 binds and phosphorylates PPP1R12A. As to expression, smooth muscle. Detected in aorta, portal vein, stomach, intestine, bladder and lung.

It is found in the cytoplasm. The protein resides in the cytoskeleton. Its subcellular location is the stress fiber. Its function is as follows. Key regulator of protein phosphatase 1C (PPP1C). Mediates binding to myosin. As part of the PPP1C complex, involved in dephosphorylation of PLK1. Capable of inhibiting HIF1AN-dependent suppression of HIF1A activity. This chain is Protein phosphatase 1 regulatory subunit 12A, found in Rattus norvegicus (Rat).